The sequence spans 76 residues: Vasotab-TY1 (76 aa).

The N-terminal stretch at 1-21 is a signal peptide; sequence MKFTLFSVLVVLLIATFVAAD. In terms of domain architecture, Kazal-like spans 22–76; that stretch reads DCPRICTADFRPVCGTPSGGRRSANRTFGNQCSLDSHNCLNKGDTYDKLHDGECK. Intrachain disulfides connect Cys-23-Cys-60, Cys-27-Cys-53, and Cys-35-Cys-75.

As to expression, expressed by the salivary gland.

Its subcellular location is the secreted. Its function is as follows. Vasodilator protein that inhibits vasoconstriction of isolated rat femoral artery induced by phenylephrine. Since platelet aggregation and vasoconstriction are key hemostatic responses, particularly in small wounds, this protein likely participates in the antihemostatic responses during blood feeding. Blocks L-type calcium channels (Cav1/CACNA1) in left ventricular myocytes isolated from rat hearts. This is Vasotab-TY1 from Tabanus yao (Horsefly).